A 341-amino-acid chain; its full sequence is BZIP domain-containing transcription factor BZP4 (341 aa).

Polar residues-rich tracts occupy residues 1-32 (MESSWPAQSSFSYYNQGSMQTSSRHASSPTNE), 61-76 (LTESGGDSLPSFSHSL), 128-139 (PLTSHSRSQITH), and 150-163 (YSSSPNLHQLSPVS). Disordered stretches follow at residues 1-95 (MESS…PHGM) and 118-254 (TNHS…DKKQ). Low complexity predominate over residues 178 to 192 (SPSSSSFPSSIPRTP). Basic and acidic residues-rich tracts occupy residues 225–234 (TGDRKHEKDS) and 242–254 (EEYKKLNPKDKKQ). The basic motif stretch occupies residues 250-269 (KDKKQVRNRIGARRFRAKRK). The bZIP domain maps to 250 to 308 (KDKKQVRNRIGARRFRAKRKDYVNQLEAGIRLRDDEITNLQSQLESQRNEINELRLQLK). The segment at 279 to 307 (IRLRDDEITNLQSQLESQRNEINELRLQL) is leucine-zipper.

Belongs to the bZIP family.

The protein localises to the nucleus. Its subcellular location is the cytoplasm. Its function is as follows. Transcription factor that promotes the production of melanin, a pigment that serves as antioxidant, reactive oxygen species (ROS) scavenger and that protect fungal pathogens from radiation and host immune responses. This chain is BZIP domain-containing transcription factor BZP4, found in Cryptococcus neoformans var. grubii serotype A (strain H99 / ATCC 208821 / CBS 10515 / FGSC 9487) (Filobasidiella neoformans var. grubii).